Reading from the N-terminus, the 296-residue chain is Phosphoribosylaminoimidazole-succinocarboxamide synthase (296 aa).

The protein belongs to the SAICAR synthetase family.

The enzyme catalyses 5-amino-1-(5-phospho-D-ribosyl)imidazole-4-carboxylate + L-aspartate + ATP = (2S)-2-[5-amino-1-(5-phospho-beta-D-ribosyl)imidazole-4-carboxamido]succinate + ADP + phosphate + 2 H(+). It participates in purine metabolism; IMP biosynthesis via de novo pathway; 5-amino-1-(5-phospho-D-ribosyl)imidazole-4-carboxamide from 5-amino-1-(5-phospho-D-ribosyl)imidazole-4-carboxylate: step 1/2. The protein is Phosphoribosylaminoimidazole-succinocarboxamide synthase of Pelobacter propionicus (strain DSM 2379 / NBRC 103807 / OttBd1).